The chain runs to 85 residues: Large ribosomal subunit protein bL27 (85 aa).

The disordered stretch occupies residues 1–23 (MAHKKAGGSSRNGRDSESKRLGV).

The protein belongs to the bacterial ribosomal protein bL27 family.

This chain is Large ribosomal subunit protein bL27, found in Methylococcus capsulatus (strain ATCC 33009 / NCIMB 11132 / Bath).